Reading from the N-terminus, the 29-residue chain is GLPVCGETCFGGRCNTPGCTCSYPICTRN.

The cyclopeptide (Gly-Asn) cross-link spans glycine 1–asparagine 29. 3 cysteine pairs are disulfide-bonded: cysteine 5–cysteine 19, cysteine 9–cysteine 21, and cysteine 14–cysteine 26.

This is a cyclic peptide.

Probably participates in a plant defense mechanism. Has moderate levels of cytotoxic activity, active against a human lymphoma cell line with an IC(50) of &gt;30 uM. This chain is Cyclotide vibi-D, found in Viola biflora (Yellow wood violet).